The chain runs to 338 residues: MAILVTGGAGYIGSHTVVELLNANKDVVVLDNLCNSSPKSLERVAQITGKQVKFYQGDILDTALLQKIFAENQIQSVIHFAGLKAVGESVQKPAEYYMNNVTGSLVLIQEMKKAGVWNFVFSSSATVYGDPEIIPITESCKVGGTTNPYGTSKFMVEQILKDIAKATPEFSITILRYFNPVGAHESGLIGEDPNGIPNNLLPYISQVAIGKLPQLSVFGSDYETHDGTGVRDYIHVVDLAIGHLKALDRHEGDAGLHIYNLGTGSGYSVLDMVKAFEKVNDIKIPYKLVDRRPGDIATCYSDPSLAKTELNWTAARGLEQMMKDTWHWQKKNPKGYRD.

Residues 11-12 (YI), 31-36 (DNLCNS), 58-59 (DI), 80-84 (FAGLK), N99, S124, Y149, K153, and F178 each bind NAD(+). Residues S124 and Y149 each contribute to the substrate site. Y149 serves as the catalytic Proton acceptor. Substrate contacts are provided by residues N179, 199–200 (NL), 216–218 (SVF), R231, and 292–295 (RPGD).

Belongs to the NAD(P)-dependent epimerase/dehydratase family. In terms of assembly, homodimer. It depends on NAD(+) as a cofactor.

The enzyme catalyses UDP-alpha-D-glucose = UDP-alpha-D-galactose. It functions in the pathway carbohydrate metabolism; galactose metabolism. In terms of biological role, involved in the metabolism of galactose. Catalyzes the conversion of UDP-galactose (UDP-Gal) to UDP-glucose (UDP-Glc) through a mechanism involving the transient reduction of NAD. The protein is UDP-glucose 4-epimerase (galE) of Pasteurella multocida (strain Pm70).